The sequence spans 227 residues: Phosphoribosylformylglycinamidine synthase subunit PurQ (227 aa).

In terms of domain architecture, Glutamine amidotransferase type-1 spans 2–227 (RWAIVRFPGA…FLGLVKEVAR (226 aa)). Residue C85 is the Nucleophile of the active site. Active-site residues include H200 and E202.

As to quaternary structure, part of the FGAM synthase complex composed of 1 PurL, 1 PurQ and 2 PurS subunits.

It localises to the cytoplasm. It catalyses the reaction N(2)-formyl-N(1)-(5-phospho-beta-D-ribosyl)glycinamide + L-glutamine + ATP + H2O = 2-formamido-N(1)-(5-O-phospho-beta-D-ribosyl)acetamidine + L-glutamate + ADP + phosphate + H(+). It carries out the reaction L-glutamine + H2O = L-glutamate + NH4(+). It participates in purine metabolism; IMP biosynthesis via de novo pathway; 5-amino-1-(5-phospho-D-ribosyl)imidazole from N(2)-formyl-N(1)-(5-phospho-D-ribosyl)glycinamide: step 1/2. Its function is as follows. Part of the phosphoribosylformylglycinamidine synthase complex involved in the purines biosynthetic pathway. Catalyzes the ATP-dependent conversion of formylglycinamide ribonucleotide (FGAR) and glutamine to yield formylglycinamidine ribonucleotide (FGAM) and glutamate. The FGAM synthase complex is composed of three subunits. PurQ produces an ammonia molecule by converting glutamine to glutamate. PurL transfers the ammonia molecule to FGAR to form FGAM in an ATP-dependent manner. PurS interacts with PurQ and PurL and is thought to assist in the transfer of the ammonia molecule from PurQ to PurL. This is Phosphoribosylformylglycinamidine synthase subunit PurQ from Thermus thermophilus (strain ATCC 27634 / DSM 579 / HB8).